Reading from the N-terminus, the 346-residue chain is Elongation factor Ts (346 aa).

The tract at residues 80 to 83 (TDFV) is involved in Mg(2+) ion dislocation from EF-Tu.

Belongs to the EF-Ts family.

The protein resides in the cytoplasm. In terms of biological role, associates with the EF-Tu.GDP complex and induces the exchange of GDP to GTP. It remains bound to the aminoacyl-tRNA.EF-Tu.GTP complex up to the GTP hydrolysis stage on the ribosome. This Streptococcus uberis (strain ATCC BAA-854 / 0140J) protein is Elongation factor Ts.